Reading from the N-terminus, the 312-residue chain is Malate dehydrogenase (312 aa).

NAD(+)-binding positions include 7 to 13 and aspartate 34; that span reads GAAGGIG. Substrate contacts are provided by arginine 81 and arginine 87. Residues asparagine 94 and 117–119 contribute to the NAD(+) site; that span reads ITN. Residues asparagine 119 and arginine 153 each coordinate substrate. The active-site Proton acceptor is the histidine 177. Position 227 (methionine 227) interacts with NAD(+).

This sequence belongs to the LDH/MDH superfamily. MDH type 1 family. In terms of assembly, homodimer.

The enzyme catalyses (S)-malate + NAD(+) = oxaloacetate + NADH + H(+). Catalyzes the reversible oxidation of malate to oxaloacetate. The sequence is that of Malate dehydrogenase from Salmonella choleraesuis (strain SC-B67).